We begin with the raw amino-acid sequence, 191 residues long: tRNA-specific adenosine deaminase 2 (191 aa).

Residues 20–145 form the CMP/dCMP-type deaminase domain; sequence EETEKWMEQA…SVLDIASADL (126 aa). Zn(2+) is bound at residue His-71. The active-site Proton donor is Glu-73. Zn(2+)-binding residues include Cys-107 and Cys-110.

It belongs to the cytidine and deoxycytidylate deaminase family. ADAT2 subfamily. The cofactor is Zn(2+).

The enzyme catalyses adenosine(34) in tRNA + H2O + H(+) = inosine(34) in tRNA + NH4(+). In terms of biological role, probably participates in deamination of adenosine-34 to inosine in many tRNAs. In Bos taurus (Bovine), this protein is tRNA-specific adenosine deaminase 2 (DEADC1).